Here is a 120-residue protein sequence, read N- to C-terminus: Photosystem II extrinsic protein U (120 aa).

Positions 1 to 29 (MKRLLSLLTGVLVMTGLLMALIFPQSAYA) are cleaved as a signal peptide.

This sequence belongs to the PsbU family. PSII is composed of 1 copy each of membrane proteins PsbA, PsbB, PsbC, PsbD, PsbE, PsbF, PsbH, PsbI, PsbJ, PsbK, PsbL, PsbM, PsbT, PsbX, PsbY, Psb30/Ycf12, peripheral proteins PsbO, CyanoQ (PsbQ), PsbU, PsbV and a large number of cofactors. It forms dimeric complexes.

The protein resides in the cellular thylakoid membrane. Its function is as follows. One of the extrinsic, lumenal subunits of photosystem II (PSII). PSII is a light-driven water plastoquinone oxidoreductase, using light energy to abstract electrons from H(2)O, generating a proton gradient subsequently used for ATP formation. The extrinsic proteins stabilize the structure of photosystem II oxygen-evolving complex (OEC), the ion environment of oxygen evolution and protect the OEC against heat-induced inactivation. The polypeptide is Photosystem II extrinsic protein U (Prochlorococcus marinus (strain MIT 9303)).